The sequence spans 488 residues: Inosine-5'-monophosphate dehydrogenase (488 aa).

2 CBS domains span residues 95-153 (VISN…SIKI) and 157-216 (MTQE…AKDE). NAD(+) contacts are provided by residues Asp-250 and 300–302 (GIG). 2 residues coordinate K(+): Gly-302 and Gly-304. Ser-305 provides a ligand contact to IMP. Cys-307 is a binding site for K(+). The active-site Thioimidate intermediate is Cys-307. IMP contacts are provided by residues 340-342 (DGG), 363-364 (GS), and 387-391 (YRGMG). The Proton acceptor role is filled by Arg-403. Glu-417 is a binding site for IMP. The interval 468-488 (GLAESHPHNIQITKESPNYSF) is disordered. K(+)-binding residues include Glu-471, Ser-472, and His-473. The span at 475–488 (HNIQITKESPNYSF) shows a compositional bias: polar residues.

The protein belongs to the IMPDH/GMPR family. In terms of assembly, homotetramer. The cofactor is K(+).

It carries out the reaction IMP + NAD(+) + H2O = XMP + NADH + H(+). Its pathway is purine metabolism; XMP biosynthesis via de novo pathway; XMP from IMP: step 1/1. With respect to regulation, mycophenolic acid (MPA) is a non-competitive inhibitor that prevents formation of the closed enzyme conformation by binding to the same site as the amobile flap. In contrast, mizoribine monophosphate (MZP) is a competitive inhibitor that induces the closed conformation. MPA is a potent inhibitor of mammalian IMPDHs but a poor inhibitor of the bacterial enzymes. MZP is a more potent inhibitor of bacterial IMPDH. In terms of biological role, catalyzes the conversion of inosine 5'-phosphate (IMP) to xanthosine 5'-phosphate (XMP), the first committed and rate-limiting step in the de novo synthesis of guanine nucleotides, and therefore plays an important role in the regulation of cell growth. The chain is Inosine-5'-monophosphate dehydrogenase from Staphylococcus aureus (strain MW2).